Consider the following 345-residue polypeptide: Phosphate acyltransferase (345 aa).

This sequence belongs to the PlsX family. Homodimer. Probably interacts with PlsY.

It localises to the cytoplasm. The enzyme catalyses a fatty acyl-[ACP] + phosphate = an acyl phosphate + holo-[ACP]. Its pathway is lipid metabolism; phospholipid metabolism. Its function is as follows. Catalyzes the reversible formation of acyl-phosphate (acyl-PO(4)) from acyl-[acyl-carrier-protein] (acyl-ACP). This enzyme utilizes acyl-ACP as fatty acyl donor, but not acyl-CoA. This is Phosphate acyltransferase from Thermodesulfovibrio yellowstonii (strain ATCC 51303 / DSM 11347 / YP87).